We begin with the raw amino-acid sequence, 368 residues long: RAB6-interacting golgin (368 aa).

Disordered stretches follow at residues 1 to 43, 55 to 133, and 302 to 368; these read MAQD…REKA, DGSA…DCKV, and KQMA…AVAT. The segment covering 11-27 has biased composition (basic and acidic residues); the sequence is EELRRLKQNKDPFEPQR. A compositionally biased stretch (pro residues) spans 80–89; the sequence is SPSPVAPSPL. Over residues 114–133 the composition is skewed to basic and acidic residues; it reads NSHHGHKSAEVRAPKPDCKV. The stretch at 145 to 310 forms a coiled coil; it reads RWEVLQQEQR…AKQMASVERL (166 aa). Residues 188-368 are necessary for interaction with RCHY1; that stretch reads IQKELQALDD…AKNFSAAVAT (181 aa).

It belongs to the GORAB family. Interacts with RCHY1. Interacts with SCYL1 and RAB6A/RAB6. In terms of tissue distribution, expressed in small intestine, kidney, skeletal muscle, lung, spleen, brain and heart. High expression is observed in osteoblasts and skin; also expressed in osteoclasts albeit at lower levels.

The protein localises to the cytoplasm. It is found in the golgi apparatus. The sequence is that of RAB6-interacting golgin (Gorab) from Mus musculus (Mouse).